A 238-amino-acid chain; its full sequence is Accessory gene regulator A (238 aa).

Positions Lys2–Glu125 constitute a Response regulatory domain. Asp59 carries the 4-aspartylphosphate modification. Positions Ile143–Ile238 constitute an HTH LytTR-type domain.

Its subcellular location is the cytoplasm. Functionally, required for high-level post-exponential phase expression of a series of secreted proteins. The polypeptide is Accessory gene regulator A (agrA) (Staphylococcus aureus (strain COL)).